The chain runs to 722 residues: Nucleolar protein 10 (722 aa).

WD repeat units follow at residues E50 to E90, T174 to A213, E228 to V266, Y270 to S308, and E310 to R349. Coiled-coil stretches lie at residues E423–A476 and S511–E534. Disordered stretches follow at residues L521–Q555, S572–Y607, R616–R635, and T664–F722. A compositionally biased stretch (acidic residues) spans E523–E534. The segment covering S572–T586 has biased composition (basic and acidic residues). Polar residues predominate over residues R587–G600. A coiled-coil region spans residues D620–R681. A compositionally biased stretch (basic and acidic residues) spans T664–R682. 2 stretches are compositionally biased toward basic residues: residues R683 to S693 and G702 to F722.

This sequence belongs to the WD repeat NOL10/ENP2 family.

It localises to the nucleus. Its subcellular location is the nucleolus. This chain is Nucleolar protein 10 (nol10), found in Danio rerio (Zebrafish).